Here is a 717-residue protein sequence, read N- to C-terminus: Catalase-peroxidase (717 aa).

The interval methionine 1 to lysine 20 is disordered. Positions glycine 11–lysine 20 are enriched in polar residues. A cross-link (tryptophyl-tyrosyl-methioninium (Trp-Tyr) (with M-245)) is located at residues tryptophan 91–tyrosine 219. The Proton acceptor role is filled by histidine 92. Positions tyrosine 219–methionine 245 form a cross-link, tryptophyl-tyrosyl-methioninium (Tyr-Met) (with W-91). Histidine 260 lines the heme b pocket.

This sequence belongs to the peroxidase family. Peroxidase/catalase subfamily. Homodimer or homotetramer. The cofactor is heme b. In terms of processing, formation of the three residue Trp-Tyr-Met cross-link is important for the catalase, but not the peroxidase activity of the enzyme.

The catalysed reaction is H2O2 + AH2 = A + 2 H2O. The enzyme catalyses 2 H2O2 = O2 + 2 H2O. Functionally, bifunctional enzyme with both catalase and broad-spectrum peroxidase activity. The protein is Catalase-peroxidase of Chromohalobacter salexigens (strain ATCC BAA-138 / DSM 3043 / CIP 106854 / NCIMB 13768 / 1H11).